Reading from the N-terminus, the 370-residue chain is Actin-related protein 2/3 complex subunit 1A (370 aa).

WD repeat units lie at residues 6 to 45 (FLLEPITCHAWNRDRTQIALSPNNHEVHIYKKNGSQWTKA), 50 to 89 (EHNGHITGIDWAPKSDRIVTCGADRNAYVWSQKDGIWKPT), 140 to 179 (PIRSTVLSLDWHPNNVLLAAGSCDFKCRVFSAYIKEVDEK), 202 to 241 (GTGGWVHGVSFSASGSRLAWVSHDSTVSVADASKSVQVST), 244 to 284 (TEFL…TFVS), and 322 to 365 (LHQN…SSIQ).

It belongs to the WD repeat ARPC1 family. Probable component of the Arp2/3 complex in which it may replace ARPC1B.

Its subcellular location is the cytoplasm. The protein resides in the cytoskeleton. The protein localises to the nucleus. In terms of biological role, probably functions as a component of the Arp2/3 complex which is involved in regulation of actin polymerization and together with an activating nucleation-promoting factor (NPF) mediates the formation of branched actin networks. In addition to its role in the cytoplasmic cytoskeleton, the Arp2/3 complex also promotes actin polymerization in the nucleus, thereby regulating gene transcription and repair of damaged DNA. This chain is Actin-related protein 2/3 complex subunit 1A (Arpc1a), found in Rattus norvegicus (Rat).